Here is a 425-residue protein sequence, read N- to C-terminus: Serine--tRNA ligase (425 aa).

Position 228 to 230 (228 to 230 (TSE)) interacts with L-serine. An ATP-binding site is contributed by 259 to 261 (RSE). Glu282 contributes to the L-serine binding site. 346-349 (EISS) is an ATP binding site. Ser384 is a binding site for L-serine.

This sequence belongs to the class-II aminoacyl-tRNA synthetase family. Type-1 seryl-tRNA synthetase subfamily. As to quaternary structure, homodimer. The tRNA molecule binds across the dimer.

Its subcellular location is the cytoplasm. The enzyme catalyses tRNA(Ser) + L-serine + ATP = L-seryl-tRNA(Ser) + AMP + diphosphate + H(+). The catalysed reaction is tRNA(Sec) + L-serine + ATP = L-seryl-tRNA(Sec) + AMP + diphosphate + H(+). Its pathway is aminoacyl-tRNA biosynthesis; selenocysteinyl-tRNA(Sec) biosynthesis; L-seryl-tRNA(Sec) from L-serine and tRNA(Sec): step 1/1. Its function is as follows. Catalyzes the attachment of serine to tRNA(Ser). Is also able to aminoacylate tRNA(Sec) with serine, to form the misacylated tRNA L-seryl-tRNA(Sec), which will be further converted into selenocysteinyl-tRNA(Sec). In Ehrlichia ruminantium (strain Gardel), this protein is Serine--tRNA ligase.